Reading from the N-terminus, the 610-residue chain is MQVPSPSVREAASMYGTAVAVFLVILVAALQGSAPAESPFPFHIPLDPEGTLELSWNISYAQETIYFQLLVRELKAGVLFGMSDRGELENADLVVLWTDRDGAYFGDAWSDQKGQVHLDSQQDYQLLRAQRTPEGLYLLFKRPFGTCDPNDYLIEDGTVHLVYGFLEEPLRSLESINTSGLHTGLQRVQLLKPSIPKPALPADTRTMEIRAPDVLIPGQQTTYWCYVTELPDGFPRHHIVMYEPIVTEGNEALVHHMEVFQCAAEFETIPHFSGPCDSKMKPQRLNFCRHVLAAWALGAKAFYYPEEAGLAFGGPGSSRFLRLEVHYHNPLVITGRRDSSGIRLYYTAALRRFDAGIMELGLAYTPVMAIPPQETAFVLTGYCTDKCTQLALPASGIHIFASQLHTHLTGRKVVTVLARDGRETEIVNRDNHYSPHFQEIRMLKKVVSVQPGDVLITSCTYNTEDRRLATVGGFGILEEMCVNYVHYYPQTQLELCKSAVDPGFLHKYFRLVNRFNSEEVCTCPQASVPEQFASVPWNSFNREVLKALYGFAPISMHCNRSSAVRFQGEWNRQPLPEIVSRLEEPTPHCPASQAQSPAGPTVLNISGGKG.

The Cytoplasmic segment spans residues 1–9; sequence MQVPSPSVR. Residues 10 to 30 form a helical; Signal-anchor for type II membrane protein membrane-spanning segment; it reads EAASMYGTAVAVFLVILVAAL. At 31–610 the chain is on the intragranular side; the sequence is QGSAPAESPF…TVLNISGGKG (580 aa). One can recognise a DOMON domain in the interval 50–166; that stretch reads GTLELSWNIS…GTVHLVYGFL (117 aa). 6 disulfides stabilise this stretch: Cys147–Cys589, Cys225–Cys276, Cys262–Cys288, Cys383–Cys496, Cys387–Cys558, and Cys459–Cys481. The N-linked (GlcNAc...) asparagine glycan is linked to Asn177. The active site involves Tyr223. Cu(2+)-binding residues include His255 and His256. The Cu(2+) site is built by His326, His405, His407, and Met480. The active site involves His405. N-linked (GlcNAc...) asparagine glycosylation is present at Asn559. Residues 585-610 are disordered; the sequence is PTPHCPASQAQSPAGPTVLNISGGKG.

The protein belongs to the copper type II ascorbate-dependent monooxygenase family. As to quaternary structure, homotetramer; composed of two disulfide-linked dimers. It depends on Cu(2+) as a cofactor. In terms of processing, proteolytic cleavage after the membrane-anchor leads to the release of the soluble form. N-glycosylated. Detected in chromaffin granules in the adrenal medulla (at protein level). Detected in adrenal medulla.

It localises to the cytoplasmic vesicle. Its subcellular location is the secretory vesicle lumen. It is found in the secretory vesicle. The protein resides in the chromaffin granule lumen. The protein localises to the secretory vesicle membrane. It localises to the chromaffin granule membrane. The catalysed reaction is dopamine + 2 L-ascorbate + O2 = (R)-noradrenaline + 2 monodehydro-L-ascorbate radical + H2O. It participates in catecholamine biosynthesis; (R)-noradrenaline biosynthesis; (R)-noradrenaline from dopamine: step 1/1. Catalyzes the hydroxylation of dopamine to noradrenaline (also known as norepinephrine), and is thus vital for regulation of these neurotransmitters. The chain is Dopamine beta-hydroxylase (DBH) from Bos taurus (Bovine).